Here is a 694-residue protein sequence, read N- to C-terminus: Elongation factor G (694 aa).

Positions 8–287 (EDYRNFGIMA…AVISYLPSPV (280 aa)) constitute a tr-type G domain. GTP is bound by residues 17–24 (AHIDAGKT), 86–90 (DTPGH), and 140–143 (NKMD).

It belongs to the TRAFAC class translation factor GTPase superfamily. Classic translation factor GTPase family. EF-G/EF-2 subfamily.

It is found in the cytoplasm. Its function is as follows. Catalyzes the GTP-dependent ribosomal translocation step during translation elongation. During this step, the ribosome changes from the pre-translocational (PRE) to the post-translocational (POST) state as the newly formed A-site-bound peptidyl-tRNA and P-site-bound deacylated tRNA move to the P and E sites, respectively. Catalyzes the coordinated movement of the two tRNA molecules, the mRNA and conformational changes in the ribosome. This is Elongation factor G from Bartonella quintana (strain Toulouse) (Rochalimaea quintana).